The sequence spans 788 residues: Structure-specific endonuclease subunit SLX4 (788 aa).

Disordered regions lie at residues 59 to 86 (LQNE…DNNR), 562 to 584 (KRQP…HDNS), and 599 to 622 (DLVN…PSSP). Basic and acidic residues predominate over residues 562 to 573 (KRQPVDSENEIR). Residues 612–622 (DTSVLQVPSSP) are compositionally biased toward polar residues.

It belongs to the SLX4 family. Forms a heterodimer with SLX1. Post-translationally, phosphorylated in response to DNA damage.

Its subcellular location is the nucleus. Regulatory subunit of the SLX1-SLX4 structure-specific endonuclease that resolves DNA secondary structures generated during DNA repair and recombination. Has endonuclease activity towards branched DNA substrates, introducing single-strand cuts in duplex DNA close to junctions with ss-DNA. This Debaryomyces hansenii (strain ATCC 36239 / CBS 767 / BCRC 21394 / JCM 1990 / NBRC 0083 / IGC 2968) (Yeast) protein is Structure-specific endonuclease subunit SLX4.